The primary structure comprises 595 residues: ATP-dependent lipid A-core flippase (595 aa).

The tract at residues 1–20 is disordered; it reads MSQAYQPDSTKTSAKKSSAV. A compositionally biased stretch (low complexity) spans 9–19; sequence STKTSAKKSSA. The next 4 helical transmembrane spans lie at 41-61, 81-101, 169-189, and 266-286; these read WWAI…EIWI, GLFP…SFLG, VIAL…ILFV, and INTP…VWLA. The 282-residue stretch at 45–326 folds into the ABC transmembrane type-1 domain; that stretch reads LLTITGFAIN…LTDVNQQLQR (282 aa). The ABC transporter domain occupies 357–592; it reads IKLDNISLVY…HGHYAQMYAR (236 aa). Position 390-397 (390-397) interacts with ATP; the sequence is GRSGAGKS.

The protein belongs to the ABC transporter superfamily. Lipid exporter (TC 3.A.1.106) family. In terms of assembly, homodimer.

The protein localises to the cell inner membrane. It catalyses the reaction ATP + H2O + lipid A-core oligosaccharideSide 1 = ADP + phosphate + lipid A-core oligosaccharideSide 2.. Involved in lipopolysaccharide (LPS) biosynthesis. Translocates lipid A-core from the inner to the outer leaflet of the inner membrane. Transmembrane domains (TMD) form a pore in the inner membrane and the ATP-binding domain (NBD) is responsible for energy generation. This chain is ATP-dependent lipid A-core flippase, found in Psychrobacter arcticus (strain DSM 17307 / VKM B-2377 / 273-4).